We begin with the raw amino-acid sequence, 190 residues long: Imidazoleglycerol-phosphate dehydratase (190 aa).

It belongs to the imidazoleglycerol-phosphate dehydratase family.

It is found in the cytoplasm. The enzyme catalyses D-erythro-1-(imidazol-4-yl)glycerol 3-phosphate = 3-(imidazol-4-yl)-2-oxopropyl phosphate + H2O. The protein operates within amino-acid biosynthesis; L-histidine biosynthesis; L-histidine from 5-phospho-alpha-D-ribose 1-diphosphate: step 6/9. The polypeptide is Imidazoleglycerol-phosphate dehydratase (Methanococcus maripaludis (strain DSM 14266 / JCM 13030 / NBRC 101832 / S2 / LL)).